A 688-amino-acid polypeptide reads, in one-letter code: MANSQRKILVTSALPYANGPIHLGHMLEYIQTDIWSRFQKLRGHECHYICADDAHGTPIMLKAQQMGIEPEEMIAQVNREHQQDFADFNIQFDNFHSTHSVENRELSSDIYLKLRDAGFIKTRTISQLFDPEKSMFLPDRFVKGTCPKCKSEDQYGDNCDNCGATYNPTDLINPKSAVSGATPVMKDSEHFFFDLPAFETMLSEWTRSGAIQDEIANKLGEWFEQGLQQWDISRDAPYFGFEIPDAPGKYFYVWLDAPIGYMGSFKNLCDRREDLNFDDFWAKDSSAEVYHFIGKDIVNFHSLFWPAMLEGAGFRKPTSVFAHGYVTVNGAKMSKSKGTFIKARTYLDNLDPEYLRYYYAAKLSGRIDDLDLNLEDFAQRVNSDLVGKLVNLASRTAGFISKRFDGKLAKVADTSLEQTFLGKQTLIAELYESREFGKAMREIMALADLANAYVADAAPWQLIKDEAKQEEAHQVCSNALNLFRILVTYLKPVLPKLADDVEAFLQFPLTWDNLNADLAGHEIAKFKALMQRVDMKNIEAIIEASKDNLVPAEAPKKADSKKATDTPVDTRPPLESDPISEEISFEDFAKIDLRIARIAKAEHVPEANKLLKLQLDLGGETKQVFAGIKSAYAPEDLEGKLTVMVANLAPRKMRFGMSEGMVLAAGPGNKDLWILEPHEGAQPGMRVK.

Positions 15-25 (PYANGPIHLGH) match the 'HIGH' region motif. The Zn(2+) site is built by Cys-146, Cys-149, Cys-159, and Cys-162. Residues 332-336 (KMSKS) carry the 'KMSKS' region motif. Position 335 (Lys-335) interacts with ATP. The segment at 552 to 576 (AEAPKKADSKKATDTPVDTRPPLES) is disordered. Basic and acidic residues predominate over residues 554–564 (APKKADSKKAT). The region spanning 587-688 (DFAKIDLRIA…EGAQPGMRVK (102 aa)) is the tRNA-binding domain.

It belongs to the class-I aminoacyl-tRNA synthetase family. MetG type 1 subfamily. In terms of assembly, homodimer. Zn(2+) is required as a cofactor.

It is found in the cytoplasm. The enzyme catalyses tRNA(Met) + L-methionine + ATP = L-methionyl-tRNA(Met) + AMP + diphosphate. Is required not only for elongation of protein synthesis but also for the initiation of all mRNA translation through initiator tRNA(fMet) aminoacylation. This is Methionine--tRNA ligase from Shewanella woodyi (strain ATCC 51908 / MS32).